The primary structure comprises 92 residues: Large ribosomal subunit protein eL43z (92 aa).

A C4-type zinc finger spans residues 39 to 60; it reads CEFCGKYSVKRKVVGIWGCKDC.

The protein belongs to the eukaryotic ribosomal protein eL43 family.

This Arabidopsis thaliana (Mouse-ear cress) protein is Large ribosomal subunit protein eL43z (RPL37AB).